A 408-amino-acid polypeptide reads, in one-letter code: CinA-like protein (408 aa).

Belongs to the CinA family.

The sequence is that of CinA-like protein from Anaeromyxobacter dehalogenans (strain 2CP-1 / ATCC BAA-258).